Here is a 491-residue protein sequence, read N- to C-terminus: Glutamate--tRNA ligase (491 aa).

Residues 13 to 23 carry the 'HIGH' region motif; sequence PSPTGFLHIGN. Cysteine 110, cysteine 112, cysteine 137, and histidine 139 together coordinate Zn(2+). The 'KMSKS' region signature appears at 254-258; it reads KLSKR. Lysine 257 provides a ligand contact to ATP.

This sequence belongs to the class-I aminoacyl-tRNA synthetase family. Glutamate--tRNA ligase type 1 subfamily. As to quaternary structure, monomer. Zn(2+) is required as a cofactor.

The protein resides in the cytoplasm. The catalysed reaction is tRNA(Glu) + L-glutamate + ATP = L-glutamyl-tRNA(Glu) + AMP + diphosphate. Its function is as follows. Catalyzes the attachment of glutamate to tRNA(Glu) in a two-step reaction: glutamate is first activated by ATP to form Glu-AMP and then transferred to the acceptor end of tRNA(Glu). The protein is Glutamate--tRNA ligase of Listeria innocua serovar 6a (strain ATCC BAA-680 / CLIP 11262).